The chain runs to 424 residues: Enolase (424 aa).

Residue Gln-163 participates in (2R)-2-phosphoglycerate binding. The active-site Proton donor is the Glu-205. Mg(2+) is bound by residues Asp-242, Glu-285, and Asp-312. The (2R)-2-phosphoglycerate site is built by Lys-337, Arg-366, Ser-367, and Lys-388. Lys-337 serves as the catalytic Proton acceptor.

This sequence belongs to the enolase family. Mg(2+) serves as cofactor.

The protein localises to the cytoplasm. Its subcellular location is the secreted. It localises to the cell surface. The catalysed reaction is (2R)-2-phosphoglycerate = phosphoenolpyruvate + H2O. It functions in the pathway carbohydrate degradation; glycolysis; pyruvate from D-glyceraldehyde 3-phosphate: step 4/5. Functionally, catalyzes the reversible conversion of 2-phosphoglycerate (2-PG) into phosphoenolpyruvate (PEP). It is essential for the degradation of carbohydrates via glycolysis. The polypeptide is Enolase (Dinoroseobacter shibae (strain DSM 16493 / NCIMB 14021 / DFL 12)).